A 344-amino-acid chain; its full sequence is Heat-inducible transcription repressor HrcA (344 aa).

It belongs to the HrcA family.

Functionally, negative regulator of class I heat shock genes (grpE-dnaK-dnaJ and groELS operons). Prevents heat-shock induction of these operons. In Geobacillus sp. (strain WCH70), this protein is Heat-inducible transcription repressor HrcA.